A 355-amino-acid chain; its full sequence is Molybdenum import ATP-binding protein ModC (355 aa).

The 233-residue stretch at 1–233 (MTLIVEAKQR…PSTASDRREA (233 aa)) folds into the ABC transporter domain. 31–38 (GRSGSGKT) is a binding site for ATP. One can recognise a Mop domain in the interval 291–355 (GLSALNILEA…AIIKTVALEA (65 aa)).

Belongs to the ABC transporter superfamily. Molybdate importer (TC 3.A.1.8) family. The complex is composed of two ATP-binding proteins (ModC), two transmembrane proteins (ModB) and a solute-binding protein (ModA).

It localises to the cell inner membrane. The catalysed reaction is molybdate(out) + ATP + H2O = molybdate(in) + ADP + phosphate + H(+). Its function is as follows. Part of the ABC transporter complex ModABC involved in molybdenum import. Responsible for energy coupling to the transport system. In Rhizobium johnstonii (strain DSM 114642 / LMG 32736 / 3841) (Rhizobium leguminosarum bv. viciae), this protein is Molybdenum import ATP-binding protein ModC.